Reading from the N-terminus, the 360-residue chain is Peptide chain release factor 1 (360 aa).

Residue Gln235 is modified to N5-methylglutamine. Positions 285 to 295 (RQAAEQADTRR) are enriched in basic and acidic residues. Positions 285-309 (RQAAEQADTRRNLLGSGDRSDKIRT) are disordered.

This sequence belongs to the prokaryotic/mitochondrial release factor family. In terms of processing, methylated by PrmC. Methylation increases the termination efficiency of RF1.

Its subcellular location is the cytoplasm. Peptide chain release factor 1 directs the termination of translation in response to the peptide chain termination codons UAG and UAA. The sequence is that of Peptide chain release factor 1 from Actinobacillus pleuropneumoniae serotype 7 (strain AP76).